A 130-amino-acid chain; its full sequence is Small ribosomal subunit protein uS9 (130 aa).

It belongs to the universal ribosomal protein uS9 family.

The sequence is that of Small ribosomal subunit protein uS9 from Pseudomonas aeruginosa (strain LESB58).